We begin with the raw amino-acid sequence, 228 residues long: Ribonuclease S-4 (228 aa).

Positions 1–27 (MGITGMTYMFTMVLSLIVLIFSASTVG) are cleaved as a signal peptide. Q36 provides a ligand contact to RNA. Cysteines 42 and 49 form a disulfide. Residue H60 participates in RNA binding. H60 serves as the catalytic Proton donor. A disulfide bond links C75 and C119. N-linked (GlcNAc) asparagine glycosylation occurs at N87. 98 to 99 (NV) lines the RNA pocket. N101 carries an N-linked (GlcNAc...) asparagine glycan. Residues F108, 111–112 (RE), and 115–116 (KH) contribute to the RNA site. The active site involves E112. The active-site Proton acceptor is H116. N-linked (GlcNAc...) asparagine glycosylation is found at N144, N160, and N175. Intrachain disulfides connect C183-C222 and C199-C210.

The protein belongs to the RNase T2 family. Post-translationally, the N-glycans attached at Asn-101, Asn-160 and Asn-175 consist predominantly of disaccharide (GlcNAc-GlcNAc). The N-glycan at 87 is 53% monosaccharide and 47% disaccharide. The N-glycan at Asn-144 contains mannose and xylose.

Its subcellular location is the secreted. It is found in the extracellular space. It catalyses the reaction a ribonucleotidyl-ribonucleotide-RNA + H2O = a 3'-end 3'-phospho-ribonucleotide-RNA + a 5'-end dephospho-ribonucleoside-RNA + H(+). Its function is as follows. Self-incompatibility (SI) is the inherited ability of a flowering plant to prevent self-fertilization by discriminating between self and non-self pollen during pollination. In many species, self-incompatibility is controlled by the single, multiallelic locus S. The polypeptide is Ribonuclease S-4 (Pyrus pyrifolia (Chinese pear)).